A 362-amino-acid polypeptide reads, in one-letter code: 3-ketodihydrosphingosine reductase gsl-3 (362 aa).

Leu55 is a binding site for NADP(+). Positions 58, 60, 62, and 83 each coordinate NADPH. Positions 58–62 (GASEG) match the GXSXG motif. Asn84 provides a ligand contact to NADP(+). Arg87 and Asp113 together coordinate NADPH. 6 residues coordinate NADP(+): Asp113, Arg176, Tyr216, Lys220, Ile252, and Ser254. Residue Tyr216 is the Proton acceptor of the active site. Lys220 acts as the Lowers pKa of active site Tyr in catalysis. A helical membrane pass occupies residues 318–338 (NNWVLDTLMGWLIPIIYFFVL).

Belongs to the short-chain dehydrogenases/reductases (SDR) family.

Its subcellular location is the endoplasmic reticulum membrane. The catalysed reaction is sphinganine + NADP(+) = 3-oxosphinganine + NADPH + H(+). It participates in lipid metabolism; sphingolipid metabolism. Its function is as follows. Catalyzes the reduction of 3'-oxosphinganine (3-ketodihydrosphingosine/KDS) to sphinganine (dihydrosphingosine/DHS), the second step of de novo sphingolipid biosynthesis. The polypeptide is 3-ketodihydrosphingosine reductase gsl-3 (gsl-3) (Neurospora crassa (strain ATCC 24698 / 74-OR23-1A / CBS 708.71 / DSM 1257 / FGSC 987)).